The following is a 352-amino-acid chain: Heavy metal-associated isoprenylated plant protein 36 (352 aa).

The region spanning 29-92 is the HMA domain; it reads YTTWVLRVSI…KIMKAGRHAE (64 aa). A metal cation contacts are provided by C40 and C43. Disordered stretches follow at residues 96–150, 162–211, and 229–252; these read TSME…GNFD, QLQP…GPPE, and PHLH…RHHP. The span at 97–107 shows a compositional bias: polar residues; it reads SMENNINNDCN. The span at 118-128 shows a compositional bias: acidic residues; the sequence is ETSGDEDDDEN. Residues 133–148 show a composition bias toward gly residues; the sequence is NGGGDVGGGGGGGGGN. Positions 172 to 183 are enriched in basic residues; that stretch reads KKKKKKKKKKKS. Residues 192-203 show a composition bias toward gly residues; sequence EGGGGGGGGGGP. Position 349 is a cysteine methyl ester (C349). The S-farnesyl cysteine moiety is linked to residue C349. A propeptide spans 350-352 (removed in mature form); it reads CVM.

It belongs to the HIPP family.

Functionally, heavy-metal-binding protein. The polypeptide is Heavy metal-associated isoprenylated plant protein 36 (Arabidopsis thaliana (Mouse-ear cress)).